Consider the following 208-residue polypeptide: 3-isopropylmalate dehydratase small subunit 2 (208 aa).

Belongs to the LeuD family. LeuD type 1 subfamily. As to quaternary structure, heterodimer of LeuC and LeuD.

The enzyme catalyses (2R,3S)-3-isopropylmalate = (2S)-2-isopropylmalate. The protein operates within amino-acid biosynthesis; L-leucine biosynthesis; L-leucine from 3-methyl-2-oxobutanoate: step 2/4. Its function is as follows. Catalyzes the isomerization between 2-isopropylmalate and 3-isopropylmalate, via the formation of 2-isopropylmaleate. This chain is 3-isopropylmalate dehydratase small subunit 2 (leuD2), found in Salmonella typhimurium (strain LT2 / SGSC1412 / ATCC 700720).